A 258-amino-acid polypeptide reads, in one-letter code: Hydroxyacylglutathione hydrolase cytoplasmic (258 aa).

Zn(2+) contacts are provided by H54 and H56. Residues D58 and H59 each coordinate Fe cation. H112 and D135 together coordinate Zn(2+). A Fe cation-binding site is contributed by D135. Substrate-binding positions include 144–146 (KFF) and 174–176 (HEY). Residue H174 coordinates Fe cation.

This sequence belongs to the metallo-beta-lactamase superfamily. Glyoxalase II family. In terms of assembly, homodimer. Fe(2+) serves as cofactor. Zn(2+) is required as a cofactor. The cofactor is Fe(3+). As to expression, mainly expressed in flowers and flower buds. Also detected in roots and leaves.

It localises to the cytoplasm. The catalysed reaction is an S-(2-hydroxyacyl)glutathione + H2O = a 2-hydroxy carboxylate + glutathione + H(+). It participates in secondary metabolite metabolism; methylglyoxal degradation; (R)-lactate from methylglyoxal: step 2/2. Its function is as follows. Thiolesterase that catalyzes the hydrolysis of S-D-lactoyl-glutathione to form glutathione and D-lactic acid. The chain is Hydroxyacylglutathione hydrolase cytoplasmic (GLX2-2) from Arabidopsis thaliana (Mouse-ear cress).